The following is a 242-amino-acid chain: MGRKWENIKRSKAKLDQQRGATFSRITKDIMKAAREGGPDPETNFLLKVAVAAARKANMPNENIQRAIARGAGLDSAERFDEIVYEGYGPGGVAIMMNIVTDNRNRTAADVRHIFSKHGGSLGETGCVSWMFKKRGVIEIDRGETPIGEDDLMMIALDAGAEDLVTEEDSYAIYTAPDALNQVMKQLEAAGVPVEKGEVAMVPTTTVAVSGEEAEQLMRLLDLLEEHDDVQNVYTNADISEA.

Belongs to the TACO1 family.

The protein resides in the cytoplasm. This Symbiobacterium thermophilum (strain DSM 24528 / JCM 14929 / IAM 14863 / T) protein is Probable transcriptional regulatory protein STH1004.